We begin with the raw amino-acid sequence, 213 residues long: AVPQSIDWRDYGAVNEVKNQGPCGGCWAFAAIATVEGIYKIRKGNLVYLSEQEVLDCAVSYGCKGGWVNRAYDFIISNNGVTTDENYPYRAYQGTCNANYFPNSAYITGYSYVRRNDESHMMYAVSNQPIAALIDASGDNFQYYKGGVYSGPCGFSLNHAITIIGYGRDSYWIVRNSWGSSWGQGGYVRIRRDVSHSGGVCGIAMSPLFPTLQ.

3 disulfide bridges follow: Cys23–Cys63, Cys57–Cys96, and Cys153–Cys201. Residue Cys26 is part of the active site. Catalysis depends on residues His159 and Asn176.

Monomer. As to expression, fruits.

With respect to regulation, inhibited by the general cysteine protease inhibitor E64 (L-trans-epoxysuccinyl-leucylamide-(4-guanido)-butane). In terms of biological role, cysteine protease that catalyzes the preferential cleavage: Ala-|-Xaa &gt; Gln-|-Xaa &gt; Tyr-Xaa &gt;&gt; Leu-|-Xaa &gt; Gly-|-Xaa. Hydrolyzes the synthetic peptide substrate Bz-Phe-Val-Arg-pNA. The protein is Macrodontain-1 of Ananas macrodontes (False pineapple).